Here is a 471-residue protein sequence, read N- to C-terminus: Thiohydroximate-O-sulfate sulfur/sulfate-lyase (nitrile-forming) NSP2 (471 aa).

A Jacalin-type lectin domain is found at 2-144 (VQKVEARGGE…LHSLGAYISS (143 aa)). Kelch repeat units lie at residues 178 to 226 (KIFS…VRMV), 231 to 277 (SLYV…SMTA), 281 to 330 (NVYV…VVQG), 332 to 379 (VWVV…VVGK), 381 to 435 (ILVF…GWSA), and 446 to 471 (GLVM…VDSA). The Proton donor role is filled by arginine 238. A (Z)-N-(sulfonatooxy)alkanimidothioate-binding residues include arginine 238, serine 271, arginine 293, glycine 322, and valine 371. Arginine 293 (proton donor) is an active-site residue. Fe(2+)-binding residues include glutamate 387, aspartate 391, and histidine 395. Tryptophan 433 contacts a (Z)-N-(sulfonatooxy)alkanimidothioate.

Belongs to the jacalin lectin family. Fe(2+) serves as cofactor. Expressed only in seeds.

It carries out the reaction a (Z)-N-(sulfonatooxy)alkanimidothioate = a nitrile + sulfur + sulfate. The catalysed reaction is (Z)-phenyl-N-(sulfonatooxy)methanimidothioate = phenylacetonitrile + sulfur + sulfate. It catalyses the reaction (Z)-N-(sulfonatooxy)prop-2-enimidothioate = but-3-enenitrile + sulfur + sulfate. The enzyme catalyses (Z)-(indol-3-yl)-N-(sulfonatooxy)methanimidothioate = (indol-3-yl)acetonitrile + sulfur + sulfate. The presence of Fe(2+) supports lyase activity in a dose-dependent manner with both benzylglucosinolate and 2-propenylglucosinolate as substrates. More active at pH 7.4 than at pH 6. In terms of biological role, specifier protein responsible for constitutive and herbivore-induced simple nitrile formation, especially in seeds. Promotes simple nitriles, but not epithionitrile or thiocyanate formation. Converts allylglucosinolate (allyl-GSL), 2-propenylglucosinolate (sinigrin), indol-3-ylmethylglucosinolate (glucobrassicin), benzylisothiocyanate and benzylglucosinolate (glucotropaeolin) to their corresponding simple nitriles in the presence of myrosinase. Catalyzes mainly the conversion of benzylisothiocyanate when benzylglucosinolate is used as the initial substrate of myrosinase. Involved in the regulation of glucosinolate content in seeds, during stratification and germination. The polypeptide is Thiohydroximate-O-sulfate sulfur/sulfate-lyase (nitrile-forming) NSP2 (Arabidopsis thaliana (Mouse-ear cress)).